The sequence spans 498 residues: Galactose-1-phosphate uridylyltransferase (498 aa).

Belongs to the galactose-1-phosphate uridylyltransferase type 2 family.

Its subcellular location is the cytoplasm. It catalyses the reaction alpha-D-galactose 1-phosphate + UDP-alpha-D-glucose = alpha-D-glucose 1-phosphate + UDP-alpha-D-galactose. The protein operates within carbohydrate metabolism; galactose metabolism. The protein is Galactose-1-phosphate uridylyltransferase of Clostridium perfringens (strain 13 / Type A).